The sequence spans 434 residues: Serine--tRNA ligase (434 aa).

An L-serine-binding site is contributed by 239-241 (TAE). 270 to 272 (RSE) provides a ligand contact to ATP. Glutamate 293 is a binding site for L-serine. 357–360 (EISS) contributes to the ATP binding site. Residue serine 393 participates in L-serine binding.

Belongs to the class-II aminoacyl-tRNA synthetase family. Type-1 seryl-tRNA synthetase subfamily. In terms of assembly, homodimer. The tRNA molecule binds across the dimer.

It localises to the cytoplasm. The catalysed reaction is tRNA(Ser) + L-serine + ATP = L-seryl-tRNA(Ser) + AMP + diphosphate + H(+). It catalyses the reaction tRNA(Sec) + L-serine + ATP = L-seryl-tRNA(Sec) + AMP + diphosphate + H(+). It participates in aminoacyl-tRNA biosynthesis; selenocysteinyl-tRNA(Sec) biosynthesis; L-seryl-tRNA(Sec) from L-serine and tRNA(Sec): step 1/1. Catalyzes the attachment of serine to tRNA(Ser). Is also able to aminoacylate tRNA(Sec) with serine, to form the misacylated tRNA L-seryl-tRNA(Sec), which will be further converted into selenocysteinyl-tRNA(Sec). This Pseudoalteromonas translucida (strain TAC 125) protein is Serine--tRNA ligase.